The primary structure comprises 273 residues: MIRVAVTGACGRMGSGIIRRVLEEEDMELVAAIEAPGTPLRGRDIGEFTGRGSVGVEVTDASNLADTLAETEPDVLVDFTVASAAVETIKTSTEAGVNLVVGTTGFSEEEMQTVRDCIERSGVRAVIAPNMAVGVNVFFKVLRDLAPILSDYDVEIIEAHHRHKKDAPSGTAVRALEVISEATGRRASEVAVHGRSGLTGERSRDEIGVHAVRGGDIVGDHIVLFAGDGERLEIVHRAHSRDAFIGGVIRAIRFIEDAEPGRIMDMGDVLGIN.

NAD(+) contacts are provided by residues 8 to 13 (GACGRM), glutamate 34, 102 to 104 (GTT), and 128 to 131 (APNM). Residue histidine 160 is the Proton donor/acceptor of the active site. A (S)-2,3,4,5-tetrahydrodipicolinate-binding site is contributed by histidine 161. Lysine 164 functions as the Proton donor in the catalytic mechanism. A (S)-2,3,4,5-tetrahydrodipicolinate-binding site is contributed by 170-171 (GT).

This sequence belongs to the DapB family.

It localises to the cytoplasm. It carries out the reaction (S)-2,3,4,5-tetrahydrodipicolinate + NAD(+) + H2O = (2S,4S)-4-hydroxy-2,3,4,5-tetrahydrodipicolinate + NADH + H(+). The enzyme catalyses (S)-2,3,4,5-tetrahydrodipicolinate + NADP(+) + H2O = (2S,4S)-4-hydroxy-2,3,4,5-tetrahydrodipicolinate + NADPH + H(+). The protein operates within amino-acid biosynthesis; L-lysine biosynthesis via DAP pathway; (S)-tetrahydrodipicolinate from L-aspartate: step 4/4. In terms of biological role, catalyzes the conversion of 4-hydroxy-tetrahydrodipicolinate (HTPA) to tetrahydrodipicolinate. This is 4-hydroxy-tetrahydrodipicolinate reductase from Methanothermobacter thermautotrophicus (strain ATCC 29096 / DSM 1053 / JCM 10044 / NBRC 100330 / Delta H) (Methanobacterium thermoautotrophicum).